Reading from the N-terminus, the 511-residue chain is Voltage-gated potassium channel KCNC1 (511 aa).

At 1–190 (MGQGDESERI…EDPYSSRYAR (190 aa)) the chain is on the cytoplasmic side. S44 is subject to Phosphoserine. Residues H77, C83, C104, and C105 each contribute to the Zn(2+) site. Positions 121–147 (SFGGAPLDNSADDADADGPGDSGDGED) are disordered. Phosphoserine is present on residues S130, S142, S158, and S160. The segment covering 130–147 (SADDADADGPGDSGDGED) has biased composition (acidic residues). Residues 191-209 (YVAFASLFFILVSITTFCL) traverse the membrane as a helical segment. N-linked (GlcNAc...) asparagine glycans are attached at residues N220 and N229. A helical membrane pass occupies residues 248–267 (IEGVCVVWFTFEFLMRVVFC). Topologically, residues 268–276 (PNKVEFIKN) are cytoplasmic. Residues 277-295 (SLNIIDFVAILPFYLEVGL) form a helical membrane-spanning segment. Residues 309–331 (FLRVVRFVRILRIFKLTRHFVGL) form a helical; Voltage-sensor membrane-spanning segment. Over 332 to 344 (RVLGHTLRASTNE) the chain is Cytoplasmic. Residues 345–366 (FLLLIIFLALGVLIFATMIYYA) traverse the membrane as a helical segment. K(+)-binding residues include T400, L401, G402, and Y403. Positions 400-405 (TLGYGD) match the Selectivity filter motif. A helical transmembrane segment spans residues 415–436 (LVGALCALAGVLTIAMPVPVIV). Residues 437-511 (NNFGMYYSLA…GRKPLRGMSI (75 aa)) lie on the Cytoplasmic side of the membrane. S474 carries the phosphoserine modification. Phosphothreonine is present on T483.

Belongs to the potassium channel family. C (Shaw) (TC 1.A.1.2) subfamily. Kv3.1/KCNC1 sub-subfamily. Homotetramer. Homomultimer. Heteromultimer with KCNG3, KCNG4 and KCNV2. Heteromultimer with KCNC2. Heterotetramer with KCNC3. Interacts with the ancillary subunits KCNE1 and KCNE2; the interaction modulates channel activity. N-glycosylated; contains sialylated glycans. As to expression, detected in cerebellum. Detected in brain (at protein level). Detected in brain.

It localises to the cell membrane. It is found in the cell projection. The protein localises to the axon. Its subcellular location is the presynaptic cell membrane. It carries out the reaction K(+)(in) = K(+)(out). Its function is as follows. Voltage-gated potassium channel that opens in response to the voltage difference across the membrane and through which potassium ions pass in accordance with their electrochemical gradient. The mechanism is time-dependent and inactivation is slow. Plays an important role in the rapid repolarization of fast-firing brain neurons. Can form functional homotetrameric channels and heterotetrameric channels that contain variable proportions of KCNC2, and possibly other family members as well. Contributes to fire sustained trains of very brief action potentials at high frequency in pallidal neurons. This Mus musculus (Mouse) protein is Voltage-gated potassium channel KCNC1.